Here is a 336-residue protein sequence, read N- to C-terminus: Glyceraldehyde-3-phosphate dehydrogenase, chromosomal (336 aa).

NAD(+)-binding positions include 12–13, aspartate 37, arginine 81, and serine 123; that span reads RI. Residues 154-156 and threonine 185 each bind D-glyceraldehyde 3-phosphate; that span reads SCT. Cysteine 155 functions as the Nucleophile in the catalytic mechanism. Asparagine 186 contributes to the NAD(+) binding site. D-glyceraldehyde 3-phosphate is bound by residues arginine 200, 213–214, and arginine 236; that span reads TG. NAD(+) is bound at residue asparagine 317.

This sequence belongs to the glyceraldehyde-3-phosphate dehydrogenase family. As to quaternary structure, homotetramer.

It catalyses the reaction D-glyceraldehyde 3-phosphate + phosphate + NAD(+) = (2R)-3-phospho-glyceroyl phosphate + NADH + H(+). Its pathway is carbohydrate biosynthesis; Calvin cycle. In terms of biological role, could be involved in carbon fixation as a component of the Calvin cycle. Catalyzes the oxidative phosphorylation of glyceraldehyde 3-phosphate (G3P) to 1,3-bisphosphoglycerate (BPG) using the cofactor NAD. The first reaction step involves the formation of a hemiacetal intermediate between G3P and a cysteine residue, and this hemiacetal intermediate is then oxidized to a thioester, with concomitant reduction of NAD to NADH. The reduced NADH is then exchanged with the second NAD, and the thioester is attacked by a nucleophilic inorganic phosphate to produce BPG. The protein is Glyceraldehyde-3-phosphate dehydrogenase, chromosomal (cbbGC) of Cupriavidus necator (strain ATCC 17699 / DSM 428 / KCTC 22496 / NCIMB 10442 / H16 / Stanier 337) (Ralstonia eutropha).